The primary structure comprises 136 residues: 14 kDa fusion protein (136 aa).

The segment at 22–50 (EAWTTSRSSTGSANPSASRKPARYPRIHA) is disordered. The span at 24-38 (WTTSRSSTGSANPSA) shows a compositional bias: polar residues. Asn-86 is a glycosylation site (N-linked (GlcNAc...) asparagine; by host).

This sequence belongs to the poxviruses fusion protein family. Homotrimer, covalently linked.

The protein resides in the virion membrane. Its function is as follows. This protein appears to play an important role in virus penetration at the level of cell fusion. The N-terminal proximal region is essential for fusion ability. Essential in fusing the outermost of the two Golgi-derived membranes enveloping the virus with the plasma membrane, and in its subsequent release extracellularly. This Vaccinia virus (strain WR 65-16) (VACV) protein is 14 kDa fusion protein.